Consider the following 129-residue polypeptide: Follitropin subunit beta (129 aa).

A signal peptide spans 1–18 (MKTVQFCFLFCCWKAICC). Disulfide bonds link Cys21-Cys69, Cys35-Cys84, Cys38-Cys122, Cys46-Cys100, Cys50-Cys102, and Cys105-Cys112. Asn25 and Asn42 each carry an N-linked (GlcNAc...) asparagine glycan.

The protein belongs to the glycoprotein hormones subunit beta family. In terms of assembly, heterodimer. The active follitropin is a heterodimer composed of an alpha chain/CGA shared with other hormones and a unique beta chain/FSHB shown here.

It localises to the secreted. Its function is as follows. Together with the alpha chain CGA constitutes follitropin, the follicle-stimulating hormone, and provides its biological specificity to the hormone heterodimer. Binds FSHR, a G protein-coupled receptor, on target cells to activate downstream signaling pathways. Follitropin is involved in follicle development and spermatogenesis in reproductive organs. This Macaca fascicularis (Crab-eating macaque) protein is Follitropin subunit beta (FSHB).